Consider the following 388-residue polypeptide: Cobalt-precorrin-5B C(1)-methyltransferase (388 aa).

It belongs to the CbiD family.

The catalysed reaction is Co-precorrin-5B + S-adenosyl-L-methionine = Co-precorrin-6A + S-adenosyl-L-homocysteine. Its pathway is cofactor biosynthesis; adenosylcobalamin biosynthesis; cob(II)yrinate a,c-diamide from sirohydrochlorin (anaerobic route): step 6/10. Its function is as follows. Catalyzes the methylation of C-1 in cobalt-precorrin-5B to form cobalt-precorrin-6A. This is Cobalt-precorrin-5B C(1)-methyltransferase from Rubrobacter xylanophilus (strain DSM 9941 / JCM 11954 / NBRC 16129 / PRD-1).